The sequence spans 157 residues: MSTLNGQTALAYAKVWHHVSAKNVPLGRLASQIATTLMGKHKPIYHPAADCGDVVVVTDCSEIGISGRKLENHKYYSHSGQPGHLKEWTMEEMAAKRGHKDLLRRAVGGMLPRNKLWDRRMKRLYIYDGAEHPYKANIFRSYHNPVSSQIAKELFSK.

The transit peptide at 1–29 (MSTLNGQTALAYAKVWHHVSAKNVPLGRL) directs the protein to the mitochondrion.

This sequence belongs to the universal ribosomal protein uL13 family. Component of the mitochondrial large ribosomal subunit (mt-LSU). Mature yeast 74S mitochondrial ribosomes consist of a small (37S) and a large (54S) subunit. The 37S small subunit contains a 15S ribosomal RNA (15S mt-rRNA) and at least 32 different proteins. The 54S large subunit contains a 21S rRNA (21S mt-rRNA) and at least 45 different proteins.

It is found in the mitochondrion. In terms of biological role, component of the mitochondrial ribosome (mitoribosome), a dedicated translation machinery responsible for the synthesis of mitochondrial genome-encoded proteins, including at least some of the essential transmembrane subunits of the mitochondrial respiratory chain. The mitoribosomes are attached to the mitochondrial inner membrane and translation products are cotranslationally integrated into the membrane. The sequence is that of Large ribosomal subunit protein uL13m from Schizosaccharomyces pombe (strain 972 / ATCC 24843) (Fission yeast).